A 530-amino-acid polypeptide reads, in one-letter code: uncharacterized protein (530 aa).

Belongs to the protein kinase superfamily. ADCK protein kinase family.

This is an uncharacterized protein from Clostridium pasteurianum.